Consider the following 380-residue polypeptide: NF-kappa-B inhibitor-like protein 1 (380 aa).

The segment at 1-34 is disordered; sequence MSNPSPQVPEGEASTSVCRPKSSMASTSRRQRRE. Polar residues predominate over residues 13–28; the sequence is ASTSVCRPKSSMASTS. 2 ANK repeats span residues 64-93 and 97-133; these read GQPP…DPAH and HGDT…IKNK. Disordered regions lie at residues 131–167 and 185–293; these read KNKD…EWRQ and EDDA…RGSL. Phosphoserine is present on Ser-150. Residues 150–159 are compositionally biased toward acidic residues; it reads SAEEEEEDEA. Basic and acidic residues-rich tracts occupy residues 204 to 221 and 236 to 272; these read RMAR…ETEG and RQQE…RDPV.

Interacts with CACTIN (via N-terminal domain); the interaction occurs in a pro-inflammatory-independent manner.

The protein localises to the nucleus. Involved in the regulation of innate immune response. Acts as negative regulator of Toll-like receptor and interferon-regulatory factor (IRF) signaling pathways. Contributes to the negative regulation of transcriptional activation of NF-kappa-B target genes in response to endogenous pro-inflammatory stimuli. This chain is NF-kappa-B inhibitor-like protein 1 (NFKBIL1), found in Sus scrofa (Pig).